Consider the following 509-residue polypeptide: MADRAALEDLVRVQGERVRGLKQQKASAEQIEEEVAKLLKLKAQLGPDEGKPKFVLKTPKGTRDYSPRQMAVREKVFDVIISCFKRHGAEVIDTPVFELKETLTGKYGEDSKLIYDLKDQGGELLSLRYDLTVPFARYLAMNKLTNIKRYHIAKVYRRDNPAMTRGRYREFYQCDFDIAGQFDPMLPDAECLKIMCEILSSLQIGDFLVKVNDRRILDGMFAICGVPDSKFRTICSSVDKLDKVSWEEVKNEMVGEKGLAPEVADRIGDYVQQHGGVSLVEQLLQDPKLSQNKQALEGLGDLKLLFEYLTLFGIADKISFDLSLARGLDYYTGVIYEAVLLQPPARAGEEPLGVGSVAAGGRYDGLVGMFDPKGRKVPCVGLSIGVERIFSIVEQRLEALEEKVRTTETQVLVASAQKKLLEERLKLISELWDAGIKAELLYKKNPKLLNQLQYCEETGIPLVAIIGEQELKDGVIKLRSVASREEVDVRREDLVEEIKRRTSQPLCIC.

Ala-2 carries the N-acetylalanine modification. The WHEP-TRS domain occupies 3 to 59 (DRAALEDLVRVQGERVRGLKQQKASAEQIEEEVAKLLKLKAQLGPDEGKPKFVLKTP). Phosphoserine is present on Ser-66. L-histidine contacts are provided by residues 130 to 132 (DLT), Arg-157, Gln-173, Asp-177, Arg-326, and 330 to 331 (YY). At Ser-356 the chain carries Phosphoserine.

It belongs to the class-II aminoacyl-tRNA synthetase family. Homodimer.

The protein localises to the cytoplasm. It catalyses the reaction tRNA(His) + L-histidine + ATP = L-histidyl-tRNA(His) + AMP + diphosphate + H(+). Functionally, catalyzes the ATP-dependent ligation of histidine to the 3'-end of its cognate tRNA, via the formation of an aminoacyl-adenylate intermediate (His-AMP). Plays a role in axon guidance. The protein is Histidine--tRNA ligase, cytoplasmic (HARS1) of Bos taurus (Bovine).